A 345-amino-acid chain; its full sequence is MAPSVISLRSHNSFSLSVSASCIKVADTQDKLIEEWRVASASQEPVLLLGEGSNVLFLEDFLGTILLNRLKGIDIREESDGWYLHVGAGENWHQLVEYTLKCGITGLENLALIPGCVGSAPIQNIGAYGIELQHVCDYVELLDLTEGKTIHLTTEECQFGYRESIFKHQYRYGFAITAVGIFLKKEWNPVLNYGDLAKLNPATVTPQQVFDSVCHMRRSKLPDPVVTGNAGSFFKNPIVTKQHADSILREYPNMPQYLQADGNVKLAAGWLIDQCKLKGFQLGGAAVHEQQALVLINKSNAKGSDIVELARYVRNQVAAKFSIQLEPEVRFIAAHGEVNAIEVLS.

The 171-residue stretch at 16–186 (LSVSASCIKV…TAVGIFLKKE (171 aa)) folds into the FAD-binding PCMH-type domain. Arg162 is an active-site residue. The active-site Proton donor is the Ser232. Glu328 is an active-site residue.

This sequence belongs to the MurB family. Requires FAD as cofactor.

The protein localises to the cytoplasm. It carries out the reaction UDP-N-acetyl-alpha-D-muramate + NADP(+) = UDP-N-acetyl-3-O-(1-carboxyvinyl)-alpha-D-glucosamine + NADPH + H(+). It participates in cell wall biogenesis; peptidoglycan biosynthesis. In terms of biological role, cell wall formation. This Pectobacterium atrosepticum (strain SCRI 1043 / ATCC BAA-672) (Erwinia carotovora subsp. atroseptica) protein is UDP-N-acetylenolpyruvoylglucosamine reductase.